A 2335-amino-acid chain; its full sequence is Pre-mRNA-processing-splicing factor 8 (2335 aa).

At Ala-2 the chain carries N-acetylalanine. The interval 812–1303 (TTVHWLESRR…KIQTRIKIGL (492 aa)) is reverse transcriptase homology domain. Phosphoserine occurs at positions 859 and 1358. The segment at 1304-1577 (NSKMPSRFPP…TLKISLIQIF (274 aa)) is linker. At Lys-1425 the chain carries N6,N6-dimethyllysine. Lys-1463 is modified (N6-acetyllysine). The important for branch point selection stretch occupies residues 1513 to 1526 (MKWKKLTNAQRSGL). The interval 1581-1752 (LWQKIHESIV…LRERIRKGLQ (172 aa)) is restriction endonuclease homology domain. Residues 1669–2034 (GDYDSHDIER…QIAEIEKQTK (366 aa)) are involved in interaction with pre-mRNA 5' splice site. The segment at 1767–2020 (NYGELFSNQI…ILGMEISAPS (254 aa)) is RNase H homology domain. The MPN domain occupies 2103–2234 (TYILPKNVLK…LTAYKLTPSG (132 aa)). The segment at 2301-2335 (PKEFYHEVHRPSHFLNFALLQEGEVYSADREDLYA) is required for interaction with EFTUD2 and SNRNP200.

As to quaternary structure, part of the U5 snRNP complex. Component of the U4/U6-U5 tri-snRNP complex composed of the U4, U6 and U5 snRNAs and at least PRPF3, PRPF4, PRPF6, PRPF8, PRPF31, SNRNP200, TXNL4A, SNRNP40, DDX23, CD2BP2, PPIH, SNU13, EFTUD2, SART1 and USP39. Component of the U5.U4atac/U6atac snRNP complexes in U12-dependent spliceosomes. Within the minor spliceosome, which acts on U12-type introns, interacts with PPIL2 and RBM48. Core component of U2-type precatalytic, catalytic and postcatalytic spliceosomal complexes. Found in a mRNA splicing-dependent exon junction complex (EJC) with SRRM1. Interacts with U5 snRNP proteins SNRP116 and SNRNP40. Interacts with EFTUD2. Interacts (via the MPN (JAB/Mov34) domain) with PRPF3 ('Lys-63'-linked polyubiquitinated); may stabilize the U4/U6-U5 tri-snRNP complex. Interacts (via RNase H homology domain) with AAR2. Interacts with RPAP3 and URI1 in a ZNHIT2-dependent manner. Interacts with C9orf78. Interacts with SNRNP200; the interaction is direct. Interacts with TSSC4; the interaction is direct. In terms of tissue distribution, widely expressed.

It is found in the nucleus. Its subcellular location is the nucleus speckle. Its function is as follows. Plays a role in pre-mRNA splicing as core component of precatalytic, catalytic and postcatalytic spliceosomal complexes, both of the predominant U2-type spliceosome and the minor U12-type spliceosome. Functions as a scaffold that mediates the ordered assembly of spliceosomal proteins and snRNAs. Required for the assembly of the U4/U6-U5 tri-snRNP complex, a building block of the spliceosome. Functions as a scaffold that positions spliceosomal U2, U5 and U6 snRNAs at splice sites on pre-mRNA substrates, so that splicing can occur. Interacts with both the 5' and the 3' splice site. This is Pre-mRNA-processing-splicing factor 8 (PRPF8) from Homo sapiens (Human).